A 911-amino-acid chain; its full sequence is DNA mismatch repair protein MutS (911 aa).

ATP is bound at residue 660–667 (GPNMAGKS).

This sequence belongs to the DNA mismatch repair MutS family.

Its function is as follows. This protein is involved in the repair of mismatches in DNA. It is possible that it carries out the mismatch recognition step. This protein has a weak ATPase activity. This is DNA mismatch repair protein MutS from Rhodopseudomonas palustris (strain HaA2).